Consider the following 506-residue polypeptide: uncharacterized protein (506 aa).

It belongs to the Mg-chelatase subunits D/I family. ComM subfamily.

This is an uncharacterized protein from Escherichia coli (strain K12).